Reading from the N-terminus, the 815-residue chain is Calpain-3 (815 aa).

Residues 7–36 (ASVAPRTAAEPRSPGPVPHPAQSKATEAGG) form a disordered region. A Calpain catalytic domain is found at 74–417 (LYVDPEFPPD…FTKLEICNLT (344 aa)). Residues Cys129, His334, and Asn358 contribute to the active site. Residues 418 to 586 (ADALQSDKLQ…KRNLSEEVEN (169 aa)) are domain III. The interval 587 to 649 (TISVDRPVPI…QESEEQQQFR (63 aa)) is linker. A disordered region spans residues 605–646 (SNKELGVDQESEEGKGKTSPDKQEQSPQPQPGSSDQESEEQQ). The span at 616 to 628 (EEGKGKTSPDKQE) shows a compositional bias: basic and acidic residues. Low complexity predominate over residues 629-639 (QSPQPQPGSSD). EF-hand domains follow at residues 643 to 677 (EEQQ…VVNK), 686 to 719 (FTLE…NKIK), 716 to 751 (NKIK…AGFH), and 781 to 815 (VRLE…TMYA). A domain IV region spans residues 650–815 (NIFKQIAGDD…LEWLQLTMYA (166 aa)). The Ca(2+) site is built by Ala656, Asp659, Glu661, Glu666, Asp699, Asp701, Ser703, Lys705, Glu710, Asp729, Asp731, Ser733, Thr735, Glu740, Asp794, Asp796, Asp798, and Ile800.

Belongs to the peptidase C2 family. As to quaternary structure, homodimer; via EF-hand domain 4. Interacts with TTN/titin. Interacts with CMYA5; this interaction, which results in CMYA5 proteolysis, may protect CAPN3 from autolysis. Interacts with SIMC1. Interacts with UTP25; the interaction is required for CAPN3 translocation to the nucleolus.

It is found in the cytoplasm. The protein localises to the nucleus. The protein resides in the nucleolus. The enzyme catalyses Broad endopeptidase activity.. With respect to regulation, activated by micromolar concentrations of calcium and inhibited by calpastatin. Functionally, calcium-regulated non-lysosomal thiol-protease. Proteolytically cleaves CTBP1. Mediates, with UTP25, the proteasome-independent degradation of p53/TP53. The protein is Calpain-3 (CAPN3) of Macaca fascicularis (Crab-eating macaque).